A 40-amino-acid chain; its full sequence is Cytochrome b6-f complex subunit 5 (40 aa).

The helical transmembrane segment at 5 to 25 (ILLGMVLGFVPVTIAGLLVAA) threads the bilayer.

This sequence belongs to the PetG family. As to quaternary structure, the 4 large subunits of the cytochrome b6-f complex are cytochrome b6, subunit IV (17 kDa polypeptide, PetD), cytochrome f and the Rieske protein, while the 4 small subunits are PetG, PetL, PetM and PetN. The complex functions as a dimer.

The protein localises to the cell inner membrane. Functionally, component of the cytochrome b6-f complex, which mediates electron transfer between photosystem II (PSII) and photosystem I (PSI), cyclic electron flow around PSI, and state transitions. PetG is required for either the stability or assembly of the cytochrome b6-f complex. The polypeptide is Cytochrome b6-f complex subunit 5 (Gloeobacter violaceus (strain ATCC 29082 / PCC 7421)).